The chain runs to 1388 residues: DNA-directed RNA polymerase subunit beta'' (1388 aa).

Zn(2+) contacts are provided by Cys224, Cys294, Cys301, and Cys304.

This sequence belongs to the RNA polymerase beta' chain family. RpoC2 subfamily. In plastids the minimal PEP RNA polymerase catalytic core is composed of four subunits: alpha, beta, beta', and beta''. When a (nuclear-encoded) sigma factor is associated with the core the holoenzyme is formed, which can initiate transcription. Requires Zn(2+) as cofactor.

It localises to the plastid. The protein localises to the chloroplast. The enzyme catalyses RNA(n) + a ribonucleoside 5'-triphosphate = RNA(n+1) + diphosphate. Functionally, DNA-dependent RNA polymerase catalyzes the transcription of DNA into RNA using the four ribonucleoside triphosphates as substrates. This is DNA-directed RNA polymerase subunit beta'' from Phalaenopsis aphrodite subsp. formosana (Moth orchid).